Reading from the N-terminus, the 43-residue chain is Mu-conotoxin-like CalTx 12.2.1E (43 aa).

Arg1 is a propeptide. 4 cysteine pairs are disulfide-bonded: Cys4/Cys16, Cys11/Cys24, Cys18/Cys29, and Cys23/Cys35. A 6'-bromotryptophan modification is found at Trp31. A 4-hydroxyproline modification is found at Pro36. Residue Trp40 is modified to 6'-bromotryptophan.

As to expression, expressed by the venom duct.

It is found in the secreted. Its function is as follows. Mu-conotoxins block voltage-gated sodium channels. This toxin reversibly blocks voltage-gated sodium channel in cephalopods, with no alteration in the voltage dependence of sodium conductance or on the kinetics of inactivation. The sequence is that of Mu-conotoxin-like CalTx 12.2.1E from Californiconus californicus (California cone).